A 679-amino-acid polypeptide reads, in one-letter code: Single-strand DNA endonuclease ASTE1 (679 aa).

Residues 351-400 (TILPTQVENMQQPNAHRISQPIRQIIYGLLLNASPHLDKTSWNALPPQPL) form an interaction with SHLD2 region. Residues 625 to 645 (RSNSKKKRQKKQNTSCSKNRG) are disordered. A compositionally biased stretch (basic residues) spans 626–635 (SNSKKKRQKK).

This sequence belongs to the asteroid family. Interacts with SHLD1, SHLD2, SHLD3, RIF1 and MAD2L2/REV7.

Its function is as follows. Structure-specific DNA endonuclease that specifically cleaves single-stranded DNA and 3' overhang DNA. Contributes to the control of DNA double-strand break repair choice by antagonizing BRCA1-dependent homologous recombination (HR) and promoting non-homologous end-joining (NHEJ). Recruited to the single-stranded DNA ends by SHLD2 and cleaves the 3' exposed DNA ends, therefore inhibiting DNA end resection (necessary for HR) and promoting DNA end protection (necessary for NHEJ). This Pongo abelii (Sumatran orangutan) protein is Single-strand DNA endonuclease ASTE1 (ASTE1).